A 387-amino-acid polypeptide reads, in one-letter code: 2-alkyl-3-oxoalkanoate reductase (387 aa).

The active-site Proton acceptor is Y190. Position 194 (K194) interacts with NADP(+).

Belongs to the 3-beta-HSD family.

It catalyses the reaction a (2R,3S)-2-alkyl-3-hydroxyalkanoate + NADP(+) = an (R)-2-alkyl-3-oxoalkanoate + NADPH + H(+). Functionally, involved in olefin biosynthesis. Catalyzes the reversible stereospecific NADPH-dependent reduction of 2-alkyl-3-oxoalkanoic acids to 2-alkyl-3-hydroxyalkanoic acids. The S.oneidensis oleABCD genes produce 3,6,9,12,15,19,22,25,28-hentriacontanonaene, which may aid the cells in adapting to a sudden drop in temperature. The protein is 2-alkyl-3-oxoalkanoate reductase of Shewanella oneidensis (strain ATCC 700550 / JCM 31522 / CIP 106686 / LMG 19005 / NCIMB 14063 / MR-1).